The primary structure comprises 472 residues: 3-isopropylmalate dehydratase large subunit (472 aa).

The tract at residues 289 to 312 (TWGTNPAQGTGVSQVVPSPDDAKD) is disordered. The span at 290–304 (WGTNPAQGTGVSQVV) shows a compositional bias: polar residues. Cys-347, Cys-407, and Cys-410 together coordinate [4Fe-4S] cluster.

This sequence belongs to the aconitase/IPM isomerase family. LeuC type 1 subfamily. In terms of assembly, heterodimer of LeuC and LeuD. [4Fe-4S] cluster serves as cofactor.

It carries out the reaction (2R,3S)-3-isopropylmalate = (2S)-2-isopropylmalate. Its pathway is amino-acid biosynthesis; L-leucine biosynthesis; L-leucine from 3-methyl-2-oxobutanoate: step 2/4. Functionally, catalyzes the isomerization between 2-isopropylmalate and 3-isopropylmalate, via the formation of 2-isopropylmaleate. The chain is 3-isopropylmalate dehydratase large subunit from Halalkalibacterium halodurans (strain ATCC BAA-125 / DSM 18197 / FERM 7344 / JCM 9153 / C-125) (Bacillus halodurans).